Consider the following 527-residue polypeptide: Catalase (527 aa).

A compositionally biased stretch (basic and acidic residues) spans 1 to 22 (MADNRDPASDQMKHWKEQRAAQ). Residues 1-42 (MADNRDPASDQMKHWKEQRAAQKPDVLTTGGGNPVGDKLNSL) form a disordered region. At Ala2 the chain carries Blocked amino end (Ala); alternate. Ala2 is modified (N-acetylalanine; alternate). Ser9 carries the phosphoserine modification. Lys13 bears the N6-succinyllysine mark. Catalysis depends on residues His75 and Asn148. NADP(+) is bound by residues His194, Phe198, Ser201, Arg203, Asn213, and Tyr215. The residue at position 221 (Lys221) is an N6-succinyllysine. Lys233 bears the N6-acetyllysine mark. NADP(+) contacts are provided by Lys237, Trp303, and His305. Tyr358 lines the heme pocket. Phosphoserine is present on residues Ser417 and Ser434. Residues Gln442, Thr445, and Phe446 each coordinate NADP(+). Residues Lys449 and Lys480 each carry the N6-acetyllysine; alternate modification. Lys449 and Lys480 each carry N6-succinyllysine; alternate. Lys499 bears the N6-acetyllysine mark. At Thr511 the chain carries Phosphothreonine. Ser517 is subject to Phosphoserine. Positions 524 to 527 (KANL) match the Microbody targeting signal; atypical motif.

The protein belongs to the catalase family. As to quaternary structure, homotetramer. Interacts (via microbody targeting signal) with PEX5, monomeric form interacts with PEX5, leading to its translocation into peroxisomes. Heme serves as cofactor. NADP(+) is required as a cofactor.

The protein resides in the peroxisome matrix. The catalysed reaction is 2 H2O2 = O2 + 2 H2O. Catalyzes the degradation of hydrogen peroxide (H(2)O(2)) generated by peroxisomal oxidases to water and oxygen, thereby protecting cells from the toxic effects of hydrogen peroxide. Promotes growth of cells including T-cells, B-cells, myeloid leukemia cells, melanoma cells, mastocytoma cells and normal and transformed fibroblast cells. The polypeptide is Catalase (CAT) (Bos taurus (Bovine)).